Here is a 512-residue protein sequence, read N- to C-terminus: Spermatocyte protein spe-8 (512 aa).

Residues 1–85 (MRSKSSEGDL…PKPSSDNNNS (85 aa)) are disordered. Over residues 15–41 (TQSREDKETTATYSEDTKPETQKERNA) the composition is skewed to basic and acidic residues. Over residues 68-78 (EAPPPPPPPKP) the composition is skewed to pro residues. Residues 114–205 (FYHGFMGRNE…YEGMTLICGL (92 aa)) enclose the SH2 domain. The Protein kinase domain occupies 217-485 (VTLNKKLGEG…KEEVGFHEIE (269 aa)). Residues 223 to 231 (LGEGQFGEV) and Lys250 contribute to the ATP site. The Proton acceptor role is filled by Asp344.

It belongs to the protein kinase superfamily. Tyr protein kinase family. Fes/fps subfamily. As to expression, expression is restricted to male germline.

It localises to the cell membrane. The protein resides in the cytoplasm. The catalysed reaction is L-tyrosyl-[protein] + ATP = O-phospho-L-tyrosyl-[protein] + ADP + H(+). In terms of biological role, probable non-receptor tyrosine-protein kinase which plays a role in spermatid activation (spermiogenesis) in hermaphrodites. This chain is Spermatocyte protein spe-8, found in Caenorhabditis elegans.